The primary structure comprises 335 residues: Sphingomyelinase C (335 aa).

Residues 1–28 (MEKFKIIKTIPKICGAFIFLLFFTFLFG) form the signal peptide.

Belongs to the neutral sphingomyelinase family.

The protein localises to the secreted. It carries out the reaction a sphingomyelin + H2O = phosphocholine + an N-acylsphing-4-enine + H(+). Its function is as follows. Virulence factor that promotes intracellular proliferation by mediating the disruption of the phagocytic vacuole and the release of bacteria into the host cell cytosol. May act in concert with the phospholipases PlcA and PlcB and the hemolysin hly to mediate efficient escape from the vacuole. The sequence is that of Sphingomyelinase C (smcL) from Listeria ivanovii.